We begin with the raw amino-acid sequence, 269 residues long: Eukaryotic translation initiation factor 3 subunit G-1 (269 aa).

The region spanning 188–266 is the RRM domain; the sequence is AAIRISNLSE…LILSVEWSKP (79 aa).

It belongs to the eIF-3 subunit G family. As to quaternary structure, component of the eukaryotic translation initiation factor 3 (eIF-3) complex. The eIF-3 complex interacts with pix.

Its subcellular location is the cytoplasm. In terms of biological role, RNA-binding component of the eukaryotic translation initiation factor 3 (eIF-3) complex, which is involved in protein synthesis of a specialized repertoire of mRNAs and, together with other initiation factors, stimulates binding of mRNA and methionyl-tRNAi to the 40S ribosome. The eIF-3 complex specifically targets and initiates translation of a subset of mRNAs involved in cell proliferation. This subunit can bind 18S rRNA. This chain is Eukaryotic translation initiation factor 3 subunit G-1, found in Drosophila virilis (Fruit fly).